The following is a 214-amino-acid chain: uncharacterized protein (214 aa).

The signal sequence occupies residues 1–15 (MRPLILSIFALFLAG). C16 carries the N-palmitoyl cysteine lipid modification. C16 carries S-diacylglycerol cysteine lipidation.

The protein to E.coli YjbF.

Its subcellular location is the cell membrane. This is an uncharacterized protein from Escherichia coli (strain K12).